The following is a 278-amino-acid chain: Transmembrane protein 41A-B (278 aa).

The signal sequence occupies residues 1-23; that stretch reads MRSIWGLIVLVAAATFYLYLLSA. Transmembrane regions (helical) follow at residues 78–98, 101–121, 164–184, 191–211, and 230–250; these read GYVF…AIPG, FLNM…IACT, LFFF…FLNV, IPIP…NFIC, and WFTL…GALI.

Belongs to the TMEM41 family.

The protein resides in the membrane. This Danio rerio (Zebrafish) protein is Transmembrane protein 41A-B.